We begin with the raw amino-acid sequence, 287 residues long: ATP synthase gamma chain (287 aa).

This sequence belongs to the ATPase gamma chain family. In terms of assembly, F-type ATPases have 2 components, CF(1) - the catalytic core - and CF(0) - the membrane proton channel. CF(1) has five subunits: alpha(3), beta(3), gamma(1), delta(1), epsilon(1). CF(0) has three main subunits: a, b and c.

The protein localises to the cell membrane. Produces ATP from ADP in the presence of a proton gradient across the membrane. The gamma chain is believed to be important in regulating ATPase activity and the flow of protons through the CF(0) complex. This is ATP synthase gamma chain from Brevibacillus brevis (strain 47 / JCM 6285 / NBRC 100599).